A 346-amino-acid polypeptide reads, in one-letter code: Tyrosine--tRNA ligase (346 aa).

Y35 contacts L-tyrosine. The 'HIGH' region signature appears at 40-48 (PTGEMHIGH). L-tyrosine contacts are provided by Y162, Q166, D169, and Q184.

It belongs to the class-I aminoacyl-tRNA synthetase family. TyrS type 3 subfamily. Homodimer.

The protein resides in the cytoplasm. It catalyses the reaction tRNA(Tyr) + L-tyrosine + ATP = L-tyrosyl-tRNA(Tyr) + AMP + diphosphate + H(+). Functionally, catalyzes the attachment of tyrosine to tRNA(Tyr) in a two-step reaction: tyrosine is first activated by ATP to form Tyr-AMP and then transferred to the acceptor end of tRNA(Tyr). The polypeptide is Tyrosine--tRNA ligase (Haloarcula marismortui (strain ATCC 43049 / DSM 3752 / JCM 8966 / VKM B-1809) (Halobacterium marismortui)).